The following is a 1140-amino-acid chain: Squamosa promoter-binding-like protein 15 (1140 aa).

Disordered stretches follow at residues 73 to 112 (RVNA…LNLQ) and 124 to 177 (DVSP…GGNS). Low complexity-rich tracts occupy residues 76–100 (AGLS…EALR) and 125–135 (VSPAATTVSSS). The span at 164–177 (ASGGGGGGGGGGNS) shows a compositional bias: gly residues. The SBP-type zinc finger occupies 184–261 (YPMCQVDDCR…AGHNRRRRKT (78 aa)). Cysteine 187, cysteine 192, cysteine 209, histidine 212, cysteine 228, cysteine 231, histidine 235, and cysteine 247 together coordinate Zn(2+). Positions 244–260 (KRSCRRRLAGHNRRRRK) match the Bipartite nuclear localization signal motif. 4 disordered regions span residues 327–382 (NNGN…ADGF), 403–472 (TSNP…TPPY), 496–517 (LSSE…PVTH), and 558–597 (KDSE…DGQD). Over residues 345–375 (ASHSQQQDSVQRTTNGFEKQTNGLDKQTNGF) the composition is skewed to polar residues. Positions 403 to 430 (TSNPDSNTSQSQGSSDSSGNNKSKSQST) are enriched in low complexity. Residues 450–466 (RKNDALERSPEMYKQPD) are compositionally biased toward basic and acidic residues. Polar residues predominate over residues 496 to 514 (LSSESSNPLDERSPSSSPP). Low complexity predominate over residues 579 to 593 (TSTSCSDHSPSTSNS).

Expressed in stems, leaf sheaths, and young panicles.

It is found in the nucleus. Trans-acting factor that binds specifically to the consensus nucleotide sequence 5'-TNCGTACAA-3'. In Oryza sativa subsp. indica (Rice), this protein is Squamosa promoter-binding-like protein 15 (SPL15).